The chain runs to 400 residues: Tryptophan synthase beta chain (400 aa).

An N6-(pyridoxal phosphate)lysine modification is found at K92.

It belongs to the TrpB family. As to quaternary structure, tetramer of two alpha and two beta chains. Requires pyridoxal 5'-phosphate as cofactor.

The catalysed reaction is (1S,2R)-1-C-(indol-3-yl)glycerol 3-phosphate + L-serine = D-glyceraldehyde 3-phosphate + L-tryptophan + H2O. The protein operates within amino-acid biosynthesis; L-tryptophan biosynthesis; L-tryptophan from chorismate: step 5/5. The beta subunit is responsible for the synthesis of L-tryptophan from indole and L-serine. This Neisseria meningitidis serogroup B (strain ATCC BAA-335 / MC58) protein is Tryptophan synthase beta chain.